The chain runs to 657 residues: THO complex subunit 1 (657 aa).

Methionine 1 carries the N-acetylmethionine modification. A Phosphoserine modification is found at serine 2. The residue at position 4 (threonine 4) is a Phosphothreonine. Lysine 31 is covalently cross-linked (Glycyl lysine isopeptide (Lys-Gly) (interchain with G-Cter in SUMO2)). Residue lysine 133 is modified to N6-acetyllysine. Residues 133–167 are dock domain; interaction with THOC2; that stretch reads KNYLLRMCNDLLRRLSKSQNTVFCGRIQLFLARLF. The segment at 194 to 222 is disordered; it reads QESTLGQKHTEDREEGMDVEEGEMGDEEA. The segment covering 206 to 222 has biased composition (acidic residues); that stretch reads REEGMDVEEGEMGDEEA. Positions 227–397 are dock domain; interaction with THOC2; the sequence is SIPIDYNLYR…WNSWKNEGCP (171 aa). An N6-acetyllysine modification is found at lysine 300. Lysine 408 is covalently cross-linked (Glycyl lysine isopeptide (Lys-Gly) (interchain with G-Cter in SUMO2)). Residues 414-430 carry the Nuclear localization signal motif; that stretch reads RKRTAPEDFLGKGPTKK. A disordered region spans residues 533-569; that stretch reads LPPPSEEIKTGEDEDEEDNDALLKENESPDVRRDKPV. Serine 537 is modified (phosphoserine). Position 542 is a phosphothreonine (threonine 542). Positions 553–569 are enriched in basic and acidic residues; that stretch reads ALLKENESPDVRRDKPV. Serine 560 carries the phosphoserine modification. Positions 570-653 constitute a Death domain; that stretch reads TGEQIEVFAN…DLAESLTNDN (84 aa). Residue lysine 580 forms a Glycyl lysine isopeptide (Lys-Gly) (interchain with G-Cter in SUMO2) linkage. Lysine 595 is covalently cross-linked (Glycyl lysine isopeptide (Lys-Gly) (interchain with G-Cter in SUMO1); alternate). Residue lysine 595 forms a Glycyl lysine isopeptide (Lys-Gly) (interchain with G-Cter in SUMO2); alternate linkage.

Belongs to the THOC1 family. Component of the THO subcomplex, which is composed of THOC1, THOC2, THOC3, THOC5, THOC6 and THOC7. The THO subcomplex interacts with DDX39B to form the THO-DDX39B complex which multimerizes into a 28-subunit tetrameric assembly. Component of the transcription/export (TREX) complex at least composed of ALYREF/THOC4, DDX39B, SARNP/CIP29, CHTOP and the THO subcomplex; in the complex interacts with THOC2, THOC5 and THOC7. TREX seems to have a dynamic structure involving ATP-dependent remodeling. Binds to the hypophosphorylated form of RB1. Interacts with RNA polymerase II. Interacts with LUZP4. In terms of processing, expression is altered specifically during apoptosis and is accompanied by the appearance of novel forms with smaller apparent molecular mass. Polyubiquitinated, leading to proteasomal degradation; probably involves NEDD4. As to expression, ubiquitous. Expressed in various cancer cell lines. Expressed at very low levels in normal breast epithelial cells and highly expressed in breast tumors. Expression is strongly associated with an aggressive phenotype of breast tumors and expression correlates with tumor size and the metastatic state of the tumor progression.

Its subcellular location is the nucleus speckle. It is found in the nucleus. The protein resides in the nucleoplasm. It localises to the nucleus matrix. The protein localises to the cytoplasm. Functionally, component of the THO subcomplex of the TREX complex which is thought to couple mRNA transcription, processing and nuclear export, and which specifically associates with spliced mRNA and not with unspliced pre-mRNA. Required for efficient export of polyadenylated RNA. The THOC1-THOC2-THOC3 core complex alone is sufficient to bind export factor NXF1-NXT1 and promote ATPase activity of DDX39B/UAP56. TREX is recruited to spliced mRNAs by a transcription-independent mechanism, binds to mRNA upstream of the exon-junction complex (EJC) and is recruited in a splicing- and cap-dependent manner to a region near the 5' end of the mRNA where it functions in mRNA export to the cytoplasm via the TAP/NXF1 pathway. Regulates transcriptional elongation of a subset of genes. Involved in genome stability by preventing co-transcriptional R-loop formation. May play a role in hair cell formation, hence may be involved in hearing. Participates in an apoptotic pathway which is characterized by activation of caspase-6, increases in the expression of BAK1 and BCL2L1 and activation of NF-kappa-B. This pathway does not require p53/TP53, nor does the presence of p53/TP53 affect the efficiency of cell killing. Activates a G2/M cell cycle checkpoint prior to the onset of apoptosis. Apoptosis is inhibited by association with RB1. Its function is as follows. (Microbial infection) The TREX complex is essential for the export of Kaposi's sarcoma-associated herpesvirus (KSHV) intronless mRNAs and infectious virus production. The chain is THO complex subunit 1 (THOC1) from Homo sapiens (Human).